We begin with the raw amino-acid sequence, 255 residues long: Hydroxyacylglutathione hydrolase (255 aa).

Residues His56, His58, Asp60, His61, His114, Asp133, and His171 each contribute to the Zn(2+) site.

Belongs to the metallo-beta-lactamase superfamily. Glyoxalase II family. Monomer. Zn(2+) serves as cofactor.

It catalyses the reaction an S-(2-hydroxyacyl)glutathione + H2O = a 2-hydroxy carboxylate + glutathione + H(+). The protein operates within secondary metabolite metabolism; methylglyoxal degradation; (R)-lactate from methylglyoxal: step 2/2. In terms of biological role, thiolesterase that catalyzes the hydrolysis of S-D-lactoyl-glutathione to form glutathione and D-lactic acid. The protein is Hydroxyacylglutathione hydrolase of Cereibacter sphaeroides (strain ATCC 17023 / DSM 158 / JCM 6121 / CCUG 31486 / LMG 2827 / NBRC 12203 / NCIMB 8253 / ATH 2.4.1.) (Rhodobacter sphaeroides).